The primary structure comprises 415 residues: uncharacterized protein (415 aa).

This is an uncharacterized protein from Escherichia coli (strain K12).